Reading from the N-terminus, the 121-residue chain is Large ribosomal subunit protein uL22c (121 aa).

The protein belongs to the universal ribosomal protein uL22 family. As to quaternary structure, part of the 50S ribosomal subunit.

Its subcellular location is the plastid. It localises to the chloroplast. In terms of biological role, this protein binds specifically to 23S rRNA. Functionally, the globular domain of the protein is located near the polypeptide exit tunnel on the outside of the subunit, while an extended beta-hairpin is found that lines the wall of the exit tunnel in the center of the 70S ribosome. This chain is Large ribosomal subunit protein uL22c (rpl22), found in Lemna minor (Common duckweed).